We begin with the raw amino-acid sequence, 35 residues long: Neurotoxin (35 aa).

3 disulfides stabilise this stretch: C7-C27, C14-C32, and C18-C34.

As to expression, expressed by the venom gland.

The protein resides in the secreted. Its function is as follows. Neurotoxin. Decreases the action potential of myelinated nerves in mice and frogs. The chain is Neurotoxin from Buthus sp. (strain IY-2001) (Scorpion).